Here is a 178-residue protein sequence, read N- to C-terminus: MSVENLKEALPEYAKDLKLNLGSITRTTELNEEQLWGTLLASAAATRNTQVLTEIGAEAADTLSAEAYHAALGAASVMAMNNVFYRGRGFLDGKYDDLRAGLRMNIIGNPGVEKANFELWCFAVSAINGCPDCVASHEHTLREAGVSRETIQEALKAAAIISGVAQAIVASQTLATAG.

Cys130 serves as the catalytic Proton donor. The cysteines at positions 130 and 133 are disulfide-linked. Cys133 functions as the Cysteine sulfenic acid (-SOH) intermediate in the catalytic mechanism.

Belongs to the AhpD family. Homotrimer.

It catalyses the reaction N(6)-[(R)-dihydrolipoyl]-L-lysyl-[lipoyl-carrier protein] + a hydroperoxide = N(6)-[(R)-lipoyl]-L-lysyl-[lipoyl-carrier protein] + an alcohol + H2O. Functionally, antioxidant protein with alkyl hydroperoxidase activity. Required for the reduction of the AhpC active site cysteine residues and for the regeneration of the AhpC enzyme activity. The chain is Alkyl hydroperoxide reductase AhpD from Mycolicibacterium paratuberculosis (strain ATCC BAA-968 / K-10) (Mycobacterium paratuberculosis).